We begin with the raw amino-acid sequence, 972 residues long: Isoleucine--tRNA ligase (972 aa).

The 'HIGH' region signature appears at 63-73 (PYANGNIHIGH). E603 contributes to the L-isoleucyl-5'-AMP binding site. The 'KMSKS' region motif lies at 644-648 (KMSKS). Residue K647 participates in ATP binding.

The protein belongs to the class-I aminoacyl-tRNA synthetase family. IleS type 1 subfamily. Monomer.

It is found in the cytoplasm. The enzyme catalyses tRNA(Ile) + L-isoleucine + ATP = L-isoleucyl-tRNA(Ile) + AMP + diphosphate. Catalyzes the attachment of isoleucine to tRNA(Ile). As IleRS can inadvertently accommodate and process structurally similar amino acids such as valine, to avoid such errors it has two additional distinct tRNA(Ile)-dependent editing activities. One activity is designated as 'pretransfer' editing and involves the hydrolysis of activated Val-AMP. The other activity is designated 'posttransfer' editing and involves deacylation of mischarged Val-tRNA(Ile). This is Isoleucine--tRNA ligase from Brucella melitensis biotype 1 (strain ATCC 23456 / CCUG 17765 / NCTC 10094 / 16M).